Reading from the N-terminus, the 669-residue chain is DNA ligase (669 aa).

Residues 34–38 (DAEYD), 83–84 (SL), and glutamate 114 each bind NAD(+). Lysine 116 (N6-AMP-lysine intermediate) is an active-site residue. NAD(+) contacts are provided by arginine 137, glutamate 171, lysine 287, and lysine 311. Residues cysteine 405, cysteine 408, cysteine 423, and cysteine 428 each contribute to the Zn(2+) site. A BRCT domain is found at 591-669 (NVESYFAGKT…EERFLQELNK (79 aa)).

The protein belongs to the NAD-dependent DNA ligase family. LigA subfamily. Mg(2+) is required as a cofactor. The cofactor is Mn(2+).

The catalysed reaction is NAD(+) + (deoxyribonucleotide)n-3'-hydroxyl + 5'-phospho-(deoxyribonucleotide)m = (deoxyribonucleotide)n+m + AMP + beta-nicotinamide D-nucleotide.. Its function is as follows. DNA ligase that catalyzes the formation of phosphodiester linkages between 5'-phosphoryl and 3'-hydroxyl groups in double-stranded DNA using NAD as a coenzyme and as the energy source for the reaction. It is essential for DNA replication and repair of damaged DNA. The chain is DNA ligase from Bacillus cereus (strain G9842).